Reading from the N-terminus, the 458-residue chain is Putative U-box domain-containing protein 46 (458 aa).

The U-box domain occupies 71 to 144; the sequence is EVPKEFICTL…TQWCLVNKYD (74 aa). ARM repeat units follow at residues 241–281 and 283–322; these read ESNK…SLSA and DSNKIIIGNSEAVKALIDLIEEGDLLATKEATSTVFNLCI.

The catalysed reaction is S-ubiquitinyl-[E2 ubiquitin-conjugating enzyme]-L-cysteine + [acceptor protein]-L-lysine = [E2 ubiquitin-conjugating enzyme]-L-cysteine + N(6)-ubiquitinyl-[acceptor protein]-L-lysine.. It functions in the pathway protein modification; protein ubiquitination. Functionally, functions as an E3 ubiquitin ligase. In Arabidopsis thaliana (Mouse-ear cress), this protein is Putative U-box domain-containing protein 46 (PUB46).